A 194-amino-acid chain; its full sequence is Probable nicotinate-nucleotide adenylyltransferase (194 aa).

The protein belongs to the NadD family.

The enzyme catalyses nicotinate beta-D-ribonucleotide + ATP + H(+) = deamido-NAD(+) + diphosphate. The protein operates within cofactor biosynthesis; NAD(+) biosynthesis; deamido-NAD(+) from nicotinate D-ribonucleotide: step 1/1. Its function is as follows. Catalyzes the reversible adenylation of nicotinate mononucleotide (NaMN) to nicotinic acid adenine dinucleotide (NaAD). This Chlorobium luteolum (strain DSM 273 / BCRC 81028 / 2530) (Pelodictyon luteolum) protein is Probable nicotinate-nucleotide adenylyltransferase.